Reading from the N-terminus, the 146-residue chain is Large ribosomal subunit protein uL16 (146 aa).

The protein belongs to the universal ribosomal protein uL16 family. Part of the 50S ribosomal subunit.

In terms of biological role, binds 23S rRNA and is also seen to make contacts with the A and possibly P site tRNAs. The chain is Large ribosomal subunit protein uL16 from Lactobacillus acidophilus (strain ATCC 700396 / NCK56 / N2 / NCFM).